The sequence spans 430 residues: Tyrosine--tRNA ligase (430 aa).

Tyrosine 36 provides a ligand contact to L-tyrosine. Residues 41–50 (PTASSLHVGS) carry the 'HIGH' region motif. Residues tyrosine 170 and glutamine 174 each coordinate L-tyrosine. Residues 230 to 234 (KMGKT) carry the 'KMSKS' region motif. Position 233 (lysine 233) interacts with ATP. The 66-residue stretch at 362 to 427 (VPAFELFDEI…GKKNYHRLVL (66 aa)) folds into the S4 RNA-binding domain.

Belongs to the class-I aminoacyl-tRNA synthetase family. TyrS type 1 subfamily. In terms of assembly, homodimer.

The protein resides in the cytoplasm. The enzyme catalyses tRNA(Tyr) + L-tyrosine + ATP = L-tyrosyl-tRNA(Tyr) + AMP + diphosphate + H(+). Functionally, catalyzes the attachment of tyrosine to tRNA(Tyr) in a two-step reaction: tyrosine is first activated by ATP to form Tyr-AMP and then transferred to the acceptor end of tRNA(Tyr). This is Tyrosine--tRNA ligase from Desulfatibacillum aliphaticivorans.